Here is a 184-residue protein sequence, read N- to C-terminus: Probable RNA 2'-phosphotransferase (184 aa).

The protein belongs to the KptA/TPT1 family.

Functionally, removes the 2'-phosphate from RNA via an intermediate in which the phosphate is ADP-ribosylated by NAD followed by a presumed transesterification to release the RNA and generate ADP-ribose 1''-2''-cyclic phosphate (APPR&gt;P). May function as an ADP-ribosylase. This chain is Probable RNA 2'-phosphotransferase, found in Escherichia coli O6:K15:H31 (strain 536 / UPEC).